Consider the following 59-residue polypeptide: MAVPFRRTSKMKKRLRRTHFKLNVPGMTECPSCGEMKLSHRVCKACGSYNGKDINVKSN.

It belongs to the bacterial ribosomal protein bL32 family. As to quaternary structure, part of the 50S ribosomal subunit.

In Bacillus subtilis (strain 168), this protein is Large ribosomal subunit protein bL32 (rpmF).